Here is a 115-residue protein sequence, read N- to C-terminus: NADH-ubiquinone oxidoreductase chain 3 (115 aa).

The next 3 helical transmembrane spans lie at 4–24 (LTVLSVNIALSTCLITIAFWL), 55–75 (FFLVAITFLLFDLEIALLLPL), and 87–107 (MMLTAFILVSVLALGLAYEWM).

This sequence belongs to the complex I subunit 3 family. In terms of assembly, core subunit of respiratory chain NADH dehydrogenase (Complex I) which is composed of 45 different subunits. Interacts with TMEM186. Interacts with TMEM242.

It localises to the mitochondrion inner membrane. The enzyme catalyses a ubiquinone + NADH + 5 H(+)(in) = a ubiquinol + NAD(+) + 4 H(+)(out). Functionally, core subunit of the mitochondrial membrane respiratory chain NADH dehydrogenase (Complex I) which catalyzes electron transfer from NADH through the respiratory chain, using ubiquinone as an electron acceptor. Essential for the catalytic activity of complex I. The polypeptide is NADH-ubiquinone oxidoreductase chain 3 (Peromyscus slevini (Slevin's mouse)).